Reading from the N-terminus, the 191-residue chain is MGALCTLWLGLVLLGVLGALQTSAQAQVSLQPNFQQDKFLGRWFTSGLASNSSWFREKKNVLSMCMSVVAPTADGGLNLTSTFLRKDQCETRTLLLRPAGTPGCYSYTSPHWGSTHDVWVVATNYEEYALLYTAGSKGLGQDFHMATLYSRTQTPKAEIKEKFSTFAKTQGFTEDAIVFLPQTDKCMEENK.

The N-terminal stretch at 1–24 is a signal peptide; it reads MGALCTLWLGLVLLGVLGALQTSA. The residue at position 25 (Gln-25) is a Pyrrolidone carboxylic acid. N-linked (GlcNAc...) asparagine glycosylation occurs at Asn-51. The active-site Nucleophile is Cys-65. An N-linked (GlcNAc...) asparagine glycan is attached at Asn-78. A disulfide bridge links Cys-89 with Cys-186.

It belongs to the calycin superfamily. Lipocalin family. Monomer. Post-translationally, N- and O-glycosylated. Both N-glycosylation recognition sites are almost quantitatively occupied by N-glycans of the biantennary complex type, with a considerable proportion of structures bearing a bisecting GlcNAc. N-glycan at Asn-78: dHex1Hex5HexNAc4. Agalacto structure as well as sialylated and nonsialylated oligosaccharides bearing alpha2-3- and/or alpha2-6-linked NeuNAc are present.

The protein localises to the rough endoplasmic reticulum. It is found in the nucleus membrane. The protein resides in the golgi apparatus. Its subcellular location is the cytoplasm. It localises to the perinuclear region. The protein localises to the secreted. The catalysed reaction is prostaglandin H2 = prostaglandin D2. Functionally, catalyzes the conversion of PGH2 to PGD2, a prostaglandin involved in smooth muscle contraction/relaxation and a potent inhibitor of platelet aggregation. Involved in a variety of CNS functions, such as sedation, NREM sleep and PGE2-induced allodynia, and may have an anti-apoptotic role in oligodendrocytes. Binds small non-substrate lipophilic molecules, including biliverdin, bilirubin, retinal, retinoic acid and thyroid hormone, and may act as a scavenger for harmful hydrophobic molecules and as a secretory retinoid and thyroid hormone transporter. Possibly involved in development and maintenance of the blood-brain, blood-retina, blood-aqueous humor and blood-testis barrier. It is likely to play important roles in both maturation and maintenance of the central nervous system and male reproductive system. Involved in PLA2G3-dependent maturation of mast cells. PLA2G3 is secreted by immature mast cells and acts on nearby fibroblasts upstream to PTDGS to synthesize PGD2, which in turn promotes mast cell maturation and degranulation via PTGDR. This Canis lupus familiaris (Dog) protein is Prostaglandin-H2 D-isomerase (PTGDS).